The chain runs to 474 residues: Protein nucleotidyltransferase YdiU (474 aa).

ATP-binding residues include Gly-89, Gly-91, Arg-92, Lys-112, Asp-124, Gly-125, Arg-175, and Arg-182. Residue Asp-256 is the Proton acceptor of the active site. Residues Asn-257 and Asp-266 each coordinate Mg(2+). Asp-266 serves as a coordination point for ATP.

It belongs to the SELO family. The cofactor is Mg(2+). Requires Mn(2+) as cofactor.

The enzyme catalyses L-seryl-[protein] + ATP = 3-O-(5'-adenylyl)-L-seryl-[protein] + diphosphate. It catalyses the reaction L-threonyl-[protein] + ATP = 3-O-(5'-adenylyl)-L-threonyl-[protein] + diphosphate. The catalysed reaction is L-tyrosyl-[protein] + ATP = O-(5'-adenylyl)-L-tyrosyl-[protein] + diphosphate. It carries out the reaction L-histidyl-[protein] + UTP = N(tele)-(5'-uridylyl)-L-histidyl-[protein] + diphosphate. The enzyme catalyses L-seryl-[protein] + UTP = O-(5'-uridylyl)-L-seryl-[protein] + diphosphate. It catalyses the reaction L-tyrosyl-[protein] + UTP = O-(5'-uridylyl)-L-tyrosyl-[protein] + diphosphate. Nucleotidyltransferase involved in the post-translational modification of proteins. It can catalyze the addition of adenosine monophosphate (AMP) or uridine monophosphate (UMP) to a protein, resulting in modifications known as AMPylation and UMPylation. This is Protein nucleotidyltransferase YdiU from Corynebacterium glutamicum (strain ATCC 13032 / DSM 20300 / JCM 1318 / BCRC 11384 / CCUG 27702 / LMG 3730 / NBRC 12168 / NCIMB 10025 / NRRL B-2784 / 534).